We begin with the raw amino-acid sequence, 492 residues long: Solute carrier family 2, facilitated glucose transporter member 1 (492 aa).

Position 1 is an N-acetylmethionine (methionine 1). Over 1–11 (MEPSSKKLTGR) the chain is Cytoplasmic. The chain crosses the membrane as a helical span at residues 12–33 (LMLAVGGAVLGSLQFGYNTGVI). At 34–66 (NAPQKVIEEFYNQTWLHRYGESISPATLTTLWS) the chain is on the extracellular side. Residue asparagine 45 is glycosylated (N-linked (GlcNAc...) asparagine). Residues 67-87 (LSVAIFSVGGMIGSFSVGLFV) form a helical membrane-spanning segment. Residues 88-90 (NRF) are Cytoplasmic-facing. The chain crosses the membrane as a helical span at residues 91–112 (GRRNSMLMMNLLAFISAVLMGF). Over 113 to 120 (SKLGKSFE) the chain is Extracellular. Residues 121–144 (MLILGRFIIGVYCGLTTGFVPMYV) traverse the membrane as a helical segment. Over 145–155 (GEVSPTALRGA) the chain is Cytoplasmic. The chain crosses the membrane as a helical span at residues 156 to 176 (LGTLHQLGIVVGILIAQVFGL). A D-glucose-binding site is contributed by glutamine 161. Residues 177 to 185 (DSIMGNEEL) lie on the Extracellular side of the membrane. Residues 186–206 (WPLLLSVIFIPALLQCVLLPF) form a helical membrane-spanning segment. Over 207–271 (CPESPRFLLI…LFRSAAYRQP (65 aa)) the chain is Cytoplasmic. A Phosphoserine modification is found at serine 226. Residues 272-293 (ILIAVVLQLSQQLSGINAVFYY) traverse the membrane as a helical segment. D-glucose contacts are provided by residues 282 to 283 (QQ) and asparagine 288. At 294 to 306 (STSIFEKAGVQQP) the chain is on the extracellular side. The chain crosses the membrane as a helical span at residues 307–328 (VYATIGSGIVNTAFTVVSLFVV). Asparagine 317 is a D-glucose binding site. The Cytoplasmic segment spans residues 329–334 (ERAGRR). Residues 335–355 (TLHLIGLAGMAGCAVLMTIAL) form a helical membrane-spanning segment. Topologically, residues 356–365 (ALLEQLPWMS) are extracellular. The chain crosses the membrane as a helical span at residues 366–388 (YLSIVAIFGFVAFFEVGPGPIPW). D-glucose contacts are provided by glutamate 380 and tryptophan 388. The Cytoplasmic portion of the chain corresponds to 389 to 401 (FIVAELFSQGPRP). The chain crosses the membrane as a helical span at residues 402–422 (AAIAVAGFSNWTSNFIVGMCF). Topologically, residues 423–429 (QYVEQLC) are extracellular. The helical transmembrane segment at 430–450 (GPYVFIIFTVLLVLFFIFTYF) threads the bilayer. Phosphoserine is present on serine 465. A disordered region spans residues 468-492 (RQGGASQSDKTPEELFHPLGADSQV). Threonine 478 carries the post-translational modification Phosphothreonine. Position 490 is a phosphoserine (serine 490).

The protein belongs to the major facilitator superfamily. Sugar transporter (TC 2.A.1.1) family. Glucose transporter subfamily. Found in a complex with ADD2, DMTN and SLC2A1. Interacts (via C-terminus cytoplasmic region) with DMTN. Interacts with SNX27; the interaction is required when endocytosed to prevent degradation in lysosomes and promote recycling to the plasma membrane. Interacts with GIPC (via PDZ domain). Interacts with STOM. Interacts with SGTA (via Gln-rich region). Interacts with BSG. Interacts with SMIM43; the interaction may promote SLC2A1-mediated glucose transport to meet the energy needs of mesendoderm differentiation. In terms of processing, phosphorylation at Ser-226 by PKC promotes glucose uptake by increasing cell membrane localization.

It localises to the cell membrane. It is found in the photoreceptor inner segment. The enzyme catalyses D-glucose(out) = D-glucose(in). With respect to regulation, the uptake of glucose is inhibited by cytochalasin B. Glucose uptake is increased in response to phorbol ester 12-O-tetradecanoylphorbol-13-acetate (TPA) treatment: TPA-induced glucose uptake requires phosphorylation at Ser-226. Its function is as follows. Facilitative glucose transporter, which is responsible for constitutive or basal glucose uptake. Has a very broad substrate specificity; can transport a wide range of aldoses including both pentoses and hexoses. Most important energy carrier of the brain: present at the blood-brain barrier and assures the energy-independent, facilitative transport of glucose into the brain. In association with BSG and NXNL1, promotes retinal cone survival by increasing glucose uptake into photoreceptors. Required for mesendoderm differentiation. This chain is Solute carrier family 2, facilitated glucose transporter member 1, found in Sus scrofa (Pig).